An 817-amino-acid chain; its full sequence is Two pore calcium channel protein 1 (817 aa).

Residues 1-113 lie on the Cytoplasmic side of the membrane; the sequence is MAVSLDDDVP…VHNHFFYMME (113 aa). A disordered region spans residues 20 to 65; the sequence is SAPLPPSNSLGQEQLPSKNGGSHSIHNSQVPSLVSGADSPPSSPTG. Positions 26–51 are enriched in polar residues; it reads SNSLGQEQLPSKNGGSHSIHNSQVPS. Residues 114–134 traverse the membrane as a helical segment; the sequence is LLTALLLLLLSLCESPAVPVL. Topologically, residues 135–137 are extracellular; the sequence is KLH. A helical membrane pass occupies residues 138–158; that stretch reads TYVHATLELFALMVVVFELCM. At 159–172 the chain is on the cytoplasmic side; it reads KLRWLGFHTFVRHK. A helical transmembrane segment spans residues 173–193; the sequence is RTMVKTSVLVVQFIEAIVVLV. The Extracellular segment spans residues 194–202; it reads RQTSHVRVT. The chain crosses the membrane as a helical span at residues 203-221; sequence RALRCIFLVDCRYCGGVRR. Over 222–235 the chain is Cytoplasmic; it reads NLRQIFQSLPPFMD. The helical transmembrane segment at 236 to 256 threads the bilayer; it reads ILLLLLFFMIIFAILGFYLFS. The Extracellular portion of the chain corresponds to 257–263; that stretch reads TNPSDPY. Residues 264–287 constitute an intramembrane region (helical; Pore-forming); that stretch reads FSTLENSIVNLFVLLTTANFPDVM. At 288–298 the chain is on the extracellular side; sequence MPSYSRNPWSC. A helical membrane pass occupies residues 299-319; that stretch reads VFFIVYLSIELYFIMNLLLAV. The Cytoplasmic segment spans residues 320 to 445; sequence VFDTFNDIEK…NILVNSKAFQ (126 aa). Residues 446–466 form a helical membrane-spanning segment; it reads YFMYLVVAVNGVWILVETFML. The Extracellular portion of the chain corresponds to 467-480; the sequence is KGGNFTSKHVPWSY. A glycan (N-linked (GlcNAc...) asparagine) is linked at N470. Residues 481–501 form a helical membrane-spanning segment; that stretch reads LVFLTIYGVELFMKVAGLGPV. Over 502-504 the chain is Cytoplasmic; that stretch reads EYL. Residues 505 to 527 form a helical membrane-spanning segment; the sequence is SSGWNLFDFSVTAFAFLGLLALT. Residues 528 to 535 are Extracellular-facing; it reads LNMEPFYF. A helical membrane pass occupies residues 536-550; the sequence is IVVLRPLQLLRLFKL. The Cytoplasmic segment spans residues 551 to 569; sequence KKRYRNVLDTMFELLPRMA. Residues 570-590 form a helical membrane-spanning segment; it reads SLGLTLLTFYYSFAIVGMEFF. Topologically, residues 591-630 are extracellular; the sequence is NGRLTPNCCNTSTVADAYRFINHTVGNKTKVEEGYYYLNN. An intramembrane region (helical; Pore-forming) is located at residues 631–654; that stretch reads FDNILNSFVTLFELTVVNNWYIIM. At 655 to 671 the chain is on the extracellular side; the sequence is EGVTSQTSHWSRLYFMT. The helical transmembrane segment at 672–692 threads the bilayer; the sequence is FYIVTMVVMTIIVAFILEAFV. The Cytoplasmic portion of the chain corresponds to 693-817; the sequence is FRMNYSRKSQ…GSRQRSQTVT (125 aa). Residues 770-794 are a coiled coil; sequence SLKMYQEEIQEWYEEHAREQEQQKL. Residues 785–817 form a disordered region; it reads HAREQEQQKLRGSVPGPAAQQPPGSRQRSQTVT. A compositionally biased stretch (polar residues) spans 806 to 817; that stretch reads PPGSRQRSQTVT.

This sequence belongs to the calcium channel alpha-1 subunit (TC 1.A.1.11) family. Two pore calcium channel subfamily. As to quaternary structure, dimer. Interacts with MTOR; the interaction is required for TPCN1 ATP sensitivity. Interacts with STX7, STX8 and STX12. Interacts with JPT2. Found in a complex with LSM12, TPCN1 and TPCN2. Post-translationally, N-glycosylated. In terms of tissue distribution, mainly expressed in epithelial tissues like lung, kidney, colon, spleen and liver (at protein level).

Its subcellular location is the lysosome membrane. The protein localises to the endosome membrane. It localises to the early endosome membrane. The protein resides in the recycling endosome membrane. It catalyses the reaction Na(+)(in) = Na(+)(out). It carries out the reaction Ca(2+)(in) = Ca(2+)(out). Its activity is regulated as follows. Na(+) current is inhibited by ATP in a MTORC-dependent manner. ATP sensitivity is independent of PI(3,5)P2. Probably regulated by Mg(2+) ions, cytosolic Mg(2+) selectively inhibits outward current while lysosomal Mg(2+) modestly inhibits both the outward and inward currents. In the absence of Mg(2+), NAADP readily activates TPCN2, with properties similar to PI(3,5)P2. Both current elicited by PI(3,5)P2 as well as NAADP are inhibited by tetrandrine. In terms of biological role, intracellular channel initially characterized as a non-selective Ca(2+)-permeable channel activated by NAADP (nicotinic acid adenine dinucleotide phosphate), it is also a voltage-gated highly-selective Na(+) channel activated directly by PI(3,5)P2 (phosphatidylinositol 3,5-bisphosphate) that senses pH changes and confers electrical excitability to organelles. Localizes to the early and recycling endosomes membranes where it plays a role in the uptake and processing of proteins and regulates organellar membrane excitability, membrane trafficking and pH homeostasis. Ion selectivity is not fixed but rather agonist-dependent and under defined ionic conditions, can be readily activated by both NAADP and PI(3,5)P2. Required for mTOR-dependent nutrient sensing. This is Two pore calcium channel protein 1 from Mus musculus (Mouse).